A 193-amino-acid polypeptide reads, in one-letter code: Thioredoxin reductase-like selenoprotein T1a (193 aa).

The first 21 residues, 1 to 21 (MRWLPFSALLLWALCLHSASA), serve as a signal peptide directing secretion. Positions 44-47 (CVSU) form a cross-link, cysteinyl-selenocysteine (Cys-Sec). Position 47 (selenocysteine 47) is a non-standard amino acid, selenocysteine. A helical transmembrane segment spans residues 83–101 (IASFLSMFKLLLIGVIILG).

This sequence belongs to the SelWTH family. Selenoprotein T subfamily. May contain a selenide-sulfide bond between Cys-44 and Sec-47. This bond is speculated to serve as redox-active pair. In terms of tissue distribution, expressed in embryonic olfactory vesicles and the photoreceptor cell layer of the embryonic retina. Low level in embryonic epiphysis.

The protein localises to the endoplasmic reticulum membrane. The catalysed reaction is [thioredoxin]-dithiol + NADP(+) = [thioredoxin]-disulfide + NADPH + H(+). Its function is as follows. Selenoprotein with thioredoxin reductase-like oxidoreductase activity. This chain is Thioredoxin reductase-like selenoprotein T1a, found in Danio rerio (Zebrafish).